The primary structure comprises 347 residues: Phosphoribosylformylglycinamidine cyclo-ligase (347 aa).

This sequence belongs to the AIR synthase family.

The protein resides in the cytoplasm. It catalyses the reaction 2-formamido-N(1)-(5-O-phospho-beta-D-ribosyl)acetamidine + ATP = 5-amino-1-(5-phospho-beta-D-ribosyl)imidazole + ADP + phosphate + H(+). It functions in the pathway purine metabolism; IMP biosynthesis via de novo pathway; 5-amino-1-(5-phospho-D-ribosyl)imidazole from N(2)-formyl-N(1)-(5-phospho-D-ribosyl)glycinamide: step 2/2. This chain is Phosphoribosylformylglycinamidine cyclo-ligase, found in Yersinia enterocolitica serotype O:8 / biotype 1B (strain NCTC 13174 / 8081).